Reading from the N-terminus, the 231-residue chain is 7-cyano-7-deazaguanine synthase (231 aa).

11-21 contacts ATP; it reads LSGGLDSATTM. Zn(2+) contacts are provided by Cys-195, Cys-205, Cys-208, and Cys-211.

It belongs to the QueC family. It depends on Zn(2+) as a cofactor.

The catalysed reaction is 7-carboxy-7-deazaguanine + NH4(+) + ATP = 7-cyano-7-deazaguanine + ADP + phosphate + H2O + H(+). It participates in purine metabolism; 7-cyano-7-deazaguanine biosynthesis. Functionally, catalyzes the ATP-dependent conversion of 7-carboxy-7-deazaguanine (CDG) to 7-cyano-7-deazaguanine (preQ(0)). The protein is 7-cyano-7-deazaguanine synthase of Syntrophus aciditrophicus (strain SB).